A 633-amino-acid chain; its full sequence is DNA mismatch repair protein MutL (633 aa).

2 disordered regions span residues 337-364 (RPDD…GEFG) and 383-405 (VGWS…TRPE). Gly residues predominate over residues 385 to 396 (WSGGSSASGGSS).

Belongs to the DNA mismatch repair MutL/HexB family.

In terms of biological role, this protein is involved in the repair of mismatches in DNA. It is required for dam-dependent methyl-directed DNA mismatch repair. May act as a 'molecular matchmaker', a protein that promotes the formation of a stable complex between two or more DNA-binding proteins in an ATP-dependent manner without itself being part of a final effector complex. This is DNA mismatch repair protein MutL from Pseudomonas aeruginosa (strain UCBPP-PA14).